The sequence spans 177 residues: UPF0102 protein BPP4042 (177 aa).

The interval 13–43 (AAQAQRRLHRRPPASPRASPGARDGGSPTQR) is disordered.

This sequence belongs to the UPF0102 family.

This chain is UPF0102 protein BPP4042, found in Bordetella parapertussis (strain 12822 / ATCC BAA-587 / NCTC 13253).